The primary structure comprises 163 residues: ATP synthase subunit b (163 aa).

The helical transmembrane segment at 10 to 29 (ALYQLLAFSVLLFFLSKFAL) threads the bilayer.

This sequence belongs to the ATPase B chain family. F-type ATPases have 2 components, F(1) - the catalytic core - and F(0) - the membrane proton channel. F(1) has five subunits: alpha(3), beta(3), gamma(1), delta(1), epsilon(1). F(0) has three main subunits: a(1), b(2) and c(10-14). The alpha and beta chains form an alternating ring which encloses part of the gamma chain. F(1) is attached to F(0) by a central stalk formed by the gamma and epsilon chains, while a peripheral stalk is formed by the delta and b chains.

The protein resides in the cell membrane. In terms of biological role, f(1)F(0) ATP synthase produces ATP from ADP in the presence of a proton or sodium gradient. F-type ATPases consist of two structural domains, F(1) containing the extramembraneous catalytic core and F(0) containing the membrane proton channel, linked together by a central stalk and a peripheral stalk. During catalysis, ATP synthesis in the catalytic domain of F(1) is coupled via a rotary mechanism of the central stalk subunits to proton translocation. Its function is as follows. Component of the F(0) channel, it forms part of the peripheral stalk, linking F(1) to F(0). In Alkalihalophilus pseudofirmus (strain ATCC BAA-2126 / JCM 17055 / OF4) (Bacillus pseudofirmus), this protein is ATP synthase subunit b.